Consider the following 212-residue polypeptide: Octanoyltransferase (212 aa).

The BPL/LPL catalytic domain maps to 34–208 (GQRQDTLILL…AFERQFNARC (175 aa)). Residues 72–79 (RGGQVTYH), 139–141 (SIG), and 152–154 (GLS) each bind substrate. Residue cysteine 170 is the Acyl-thioester intermediate of the active site.

Belongs to the LipB family.

It is found in the cytoplasm. It carries out the reaction octanoyl-[ACP] + L-lysyl-[protein] = N(6)-octanoyl-L-lysyl-[protein] + holo-[ACP] + H(+). The protein operates within protein modification; protein lipoylation via endogenous pathway; protein N(6)-(lipoyl)lysine from octanoyl-[acyl-carrier-protein]: step 1/2. Functionally, catalyzes the transfer of endogenously produced octanoic acid from octanoyl-acyl-carrier-protein onto the lipoyl domains of lipoate-dependent enzymes. Lipoyl-ACP can also act as a substrate although octanoyl-ACP is likely to be the physiological substrate. The sequence is that of Octanoyltransferase from Magnetococcus marinus (strain ATCC BAA-1437 / JCM 17883 / MC-1).